The following is a 130-amino-acid chain: MLRRTVSNFAMSPYMLFISDLAKTGKLKGIRTPGKFVGKKYRQLSAKEKAALQQRAKQASTPAMTAYRRMAHREMSNKSVPIEQRRANLTKKWNETKQAQREKAQKAQKKTKSAKSKVKKAAKKSKKSKK.

Residues 1–10 constitute a propeptide that is removed on maturation; it reads MLRRTVSNFA. A disordered region spans residues 89 to 130; sequence LTKKWNETKQAQREKAQKAQKKTKSAKSKVKKAAKKSKKSKK. The span at 92-105 shows a compositional bias: basic and acidic residues; it reads KWNETKQAQREKAQ. Over residues 106 to 130 the composition is skewed to basic residues; it reads KAQKKTKSAKSKVKKAAKKSKKSKK.

It belongs to the KAP family. Associates with the kinetoplast DNA network.

The protein localises to the mitochondrion matrix. It localises to the kinetoplast. Its function is as follows. Histone H1-like DNA-binding protein involved in the organization and segregation of kinetoplast DNA (kDNA). The mitochondrial DNA of kinetoplastid protozoa consists of about 5,000 minicircles and 20 to 30 maxicircles. These circular DNAs are held together by catenation into a highly organized compact disk structure referred to as a kinetoplast DNA (kDNA) network. Binds preferentially to a specific fragment of minicircle DNA and is able to compact kDNA networks through DNA charge neutralization and condensation. The protein is kinetoplast-associated protein 2-1 (KAP2-1) of Crithidia fasciculata.